The sequence spans 414 residues: Carboxyl-terminal-processing protease (414 aa).

The first 29 residues, 1 to 29 (MLRKRLQAGLCSLLLVLVLVFGPMERAIA), serve as a signal peptide directing secretion. One can recognise a PDZ domain in the interval 100-184 (YRSLKVSTSG…STVSLTVKSP (85 aa)). Residues S310, D321, and K335 each act as charge relay system in the active site.

The protein belongs to the peptidase S41A family.

The protein resides in the cellular thylakoid lumen. The enzyme catalyses The enzyme shows specific recognition of a C-terminal tripeptide, Xaa-Yaa-Zaa, in which Xaa is preferably Ala or Leu, Yaa is preferably Ala or Tyr, and Zaa is preferably Ala, but then cleaves at a variable distance from the C-terminus. A typical cleavage is -Ala-Ala-|-Arg-Ala-Ala-Lys-Glu-Asn-Tyr-Ala-Leu-Ala-Ala.. Cleavage of the 16 C-terminal residues from the D1 precursor of photosystem II (PSII). This proteolytic processing is necessary to allow the light-driven assembly of the oxygen-evolving cluster (a tetranuclear manganese), which is responsible for photosynthetic water oxidation. The chain is Carboxyl-terminal-processing protease (ctpA) from Picosynechococcus sp. (strain ATCC 27264 / PCC 7002 / PR-6) (Agmenellum quadruplicatum).